The chain runs to 37 residues: MIEVLLFGIVLGLIPITLAGLFVTAYLQYRRGDQLDL.

Residues 5–25 (LLFGIVLGLIPITLAGLFVTA) form a helical membrane-spanning segment.

It belongs to the PetG family. As to quaternary structure, the 4 large subunits of the cytochrome b6-f complex are cytochrome b6, subunit IV (17 kDa polypeptide, PetD), cytochrome f and the Rieske protein, while the 4 small subunits are PetG, PetL, PetM and PetN. The complex functions as a dimer.

The protein resides in the plastid. Its subcellular location is the chloroplast thylakoid membrane. In terms of biological role, component of the cytochrome b6-f complex, which mediates electron transfer between photosystem II (PSII) and photosystem I (PSI), cyclic electron flow around PSI, and state transitions. PetG is required for either the stability or assembly of the cytochrome b6-f complex. This chain is Cytochrome b6-f complex subunit 5, found in Lemna minor (Common duckweed).